The following is a 372-amino-acid chain: Probable dual-specificity RNA methyltransferase RlmN (372 aa).

Residues 1–20 are disordered; it reads MTSLPLTPVNPDAPARRAAM. The Proton acceptor role is filled by E112. One can recognise a Radical SAM core domain in the interval 118–357; that stretch reads YPDRVTVCLS…STTVRDTRGR (240 aa). A disulfide bridge links C125 with C363. Positions 132, 136, and 139 each coordinate [4Fe-4S] cluster. S-adenosyl-L-methionine is bound by residues 187–188, S221, 244–246, and N320; these read GE and SLH. C363 acts as the S-methylcysteine intermediate in catalysis.

The protein belongs to the radical SAM superfamily. RlmN family. It depends on [4Fe-4S] cluster as a cofactor.

The protein resides in the cytoplasm. The catalysed reaction is adenosine(2503) in 23S rRNA + 2 reduced [2Fe-2S]-[ferredoxin] + 2 S-adenosyl-L-methionine = 2-methyladenosine(2503) in 23S rRNA + 5'-deoxyadenosine + L-methionine + 2 oxidized [2Fe-2S]-[ferredoxin] + S-adenosyl-L-homocysteine. It carries out the reaction adenosine(37) in tRNA + 2 reduced [2Fe-2S]-[ferredoxin] + 2 S-adenosyl-L-methionine = 2-methyladenosine(37) in tRNA + 5'-deoxyadenosine + L-methionine + 2 oxidized [2Fe-2S]-[ferredoxin] + S-adenosyl-L-homocysteine. Its function is as follows. Specifically methylates position 2 of adenine 2503 in 23S rRNA and position 2 of adenine 37 in tRNAs. This Salinispora tropica (strain ATCC BAA-916 / DSM 44818 / JCM 13857 / NBRC 105044 / CNB-440) protein is Probable dual-specificity RNA methyltransferase RlmN.